The primary structure comprises 139 residues: MRIMGLDVGSKTVGVAISDPLGFTAQGXEIIQINEEQGQFGFDRVKELVDTYKVERFVVGLPKNMNNTSGPRVEASQAYGAKLEEFFGLPVDYQDERLTTVAAERMLIEQADISRNKRKKVIDKLAAQLILQNYLDRKF.

The protein belongs to the YqgF nuclease family.

The protein localises to the cytoplasm. Its function is as follows. Could be a nuclease involved in processing of the 5'-end of pre-16S rRNA. This chain is Putative pre-16S rRNA nuclease, found in Streptococcus pneumoniae serotype 19F (strain G54).